The primary structure comprises 376 residues: Heat stress transcription factor A-2a (376 aa).

Residues 137 to 168 (LKTIKRRRPPPSSPPSSSSSSSSSQHQQQPAA) are disordered. Over residues 151 to 160 (PSSSSSSSSS) the composition is skewed to low complexity. Residues 182–229 (VNRLQRDKSVLIAEVVKLRQEQQTTRAQMQAMEERISAAEQKQQQMTV) adopt a coiled-coil conformation. The tract at residues 185–235 (LQRDKSVLIAEVVKLRQEQQTTRAQMQAMEERISAAEQKQQQMTVFLARAM) is hydrophobic repeat HR-A/B. A Nuclear localization signal motif is present at residues 265 to 269 (KKRRR). 2 disordered regions span residues 296–319 (VAEP…DTES) and 332–362 (KQRE…DDDD). Gly residues predominate over residues 307–316 (GDGGGGGGGD). Residues 318 to 325 (ESFWMQLL) carry the AHA motif. A compositionally biased stretch (acidic residues) spans 352 to 362 (VDNDEEDDDDD). The Nuclear export signal signature appears at 366-373 (LVQSIYHL).

Belongs to the HSF family. Class A subfamily. As to quaternary structure, homotrimer. In terms of processing, exhibits temperature-dependent phosphorylation.

It is found in the cytoplasm. The protein resides in the nucleus. In terms of biological role, transcriptional regulator that specifically binds DNA of heat shock promoter elements (HSE). The sequence is that of Heat stress transcription factor A-2a (HSFA2A) from Oryza sativa subsp. japonica (Rice).